The primary structure comprises 464 residues: Elongation factor 1-alpha (464 aa).

Positions 5 to 242 constitute a tr-type G domain; the sequence is KTHINIVVIG…DSVVPPQRPT (238 aa). Residues 14-21, 91-95, and 153-156 contribute to the GTP site; these read GHVDSGKS, DAPGH, and NKMD. 5-glutamyl glycerylphosphorylethanolamine occurs at positions 301 and 374.

The protein belongs to the TRAFAC class translation factor GTPase superfamily. Classic translation factor GTPase family. EF-Tu/EF-1A subfamily.

It localises to the cytoplasm. Its function is as follows. This protein promotes the GTP-dependent binding of aminoacyl-tRNA to the A-site of ribosomes during protein biosynthesis. The protein is Elongation factor 1-alpha of Onchocerca volvulus.